Reading from the N-terminus, the 134-residue chain is DNA-binding protein H-NS, plasmid (134 aa).

Positions 23-67 form a coiled coil; sequence LEILEELLEKLSVVVEERRQEESSKEAELKARLEKIESLRQLMLE. The interval 77–96 is disordered; that stretch reads SSFSAKSGAPKKVREPRPAK. Residues 112–117 mediate DNA binding; that stretch reads QGRTPK.

The protein belongs to the histone-like protein H-NS family. As to quaternary structure, homodimer that oligomerizes on DNA into higher-order complexes that form bridges between disparate regions of DNA compacting it. Interacts with Hha, YdgT and StpA.

Its subcellular location is the cytoplasm. The protein resides in the nucleoid. In terms of biological role, a DNA-binding protein implicated in transcriptional repression and chromosome organization and compaction. Binds DNA, modifying gene expression, especially non-core genes. Does not regulate the same set of genes as its chromosomal counterpart (tested in S.typhimurium strain SL1344 / SV5015, chromosomal H-NS protein is AC A0A0H3NBY9). Thus it has a not-completely overlapping set of gene targets compared to its chromosomal homolog; many of these target genes are either plasmid-encoded or acquired by horizontally transferred genes (HTG). This protein can function in the absence of H-NS-modulating protein Hha (either chromosomal or plasmid-encoded), although many HTG genes are regulated by an H-NS/Hha complex. Binds nucleation sites in AT-rich DNA and bridges them, forming higher-order nucleoprotein complexes and condensing the chromosome. A subset of genes are repressed by H-NS in association with Hha and/or Cnu (ydgT). The chain is DNA-binding protein H-NS, plasmid (hns) from Salmonella typhi.